A 670-amino-acid chain; its full sequence is Transketolase (670 aa).

His-31 contributes to the substrate binding site. Thiamine diphosphate contacts are provided by residues His-71 and 120–122; that span reads GPL. Asp-161 lines the Mg(2+) pocket. Thiamine diphosphate is bound by residues Gly-162 and Asn-191. Mg(2+) contacts are provided by Asn-191 and Ile-193. Residues His-268, Arg-362, and Ser-389 each contribute to the substrate site. His-268 is a thiamine diphosphate binding site. Glu-416 functions as the Proton donor in the catalytic mechanism. A thiamine diphosphate-binding site is contributed by Phe-443. Substrate is bound by residues His-467, Asp-475, and Arg-528.

Homodimer. It depends on Mg(2+) as a cofactor. The cofactor is Ca(2+). Mn(2+) serves as cofactor. Co(2+) is required as a cofactor. Requires thiamine diphosphate as cofactor.

The enzyme catalyses D-sedoheptulose 7-phosphate + D-glyceraldehyde 3-phosphate = aldehydo-D-ribose 5-phosphate + D-xylulose 5-phosphate. In terms of biological role, catalyzes the transfer of a two-carbon ketol group from a ketose donor to an aldose acceptor, via a covalent intermediate with the cofactor thiamine pyrophosphate. The sequence is that of Transketolase (tkt) from Nostoc sp. (strain PCC 7120 / SAG 25.82 / UTEX 2576).